A 1282-amino-acid chain; its full sequence is Myosin-1 (1282 aa).

Residues 1–30 (MAISKKAGAKKAGAVSKPPPSKGASSKGGV) form a disordered region. A Myosin motor domain is found at 44-723 (AGVSDMTLLS…TLFALETMRD (680 aa)). ATP is bound at residue 137–144 (GESGAGKT). Position 365 is a phosphoserine (Ser-365). Positions 412–494 (VIGVLDIYGF…PGIFSALNDA (83 aa)) are actin-binding. Residues 569 to 590 (LQKLFPDRPDPNSKKRPPTAGD) form a disordered region. IQ domains are found at residues 727-747 (HNMAMRIQRAYRNYLRYKEEC) and 748-773 (ARRIQRMWKNNKEGLQYIQLRDYGHQ). The TH1 domain occupies 781-977 (RRRFSLLGLR…AVSVCSGEPA (197 aa)). The tract at residues 973–1073 (SGEPANSVSR…PPPAAVAPSE (101 aa)) is disordered. Over residues 1029–1058 (PGSGAAGTARPAAAVGSASAGAGVGATRSA) the composition is skewed to low complexity. Over residues 1059–1068 (PRPPPPPPAA) the composition is skewed to pro residues. The SH3 domain occupies 1074–1135 (PQVARYKALY…PSNYLELIVQ (62 aa)). A disordered region spans residues 1237-1282 (AAAAAAGAGANGKGAGAPPAVAAKPVVAPKPAGSNGRAMPPPPPRR). Residues 1252 to 1269 (GAPPAVAAKPVVAPKPAG) show a composition bias toward low complexity.

Belongs to the TRAFAC class myosin-kinesin ATPase superfamily. Myosin family. Phosphorylation of the TEDS site (Ser-365) is required for the polarization of the actin cytoskeleton. Phosphorylation probably activates the myosin-I ATPase activity.

It is found in the cytoplasm. Its subcellular location is the cytoskeleton. The protein localises to the actin patch. Its function is as follows. Type-I myosin implicated in the organization of the actin cytoskeleton. Required for proper actin cytoskeleton polarization. At the cell cortex, assembles in patch-like structures together with proteins from the actin-polymerizing machinery and promotes actin assembly. Functions as actin nucleation-promoting factor (NPF) for the Arp2/3 complex. In Mycosarcoma maydis (Corn smut fungus), this protein is Myosin-1 (myo1).